Consider the following 556-residue polypeptide: Urocanate hydratase (556 aa).

NAD(+) is bound by residues 52 to 53 (GG), Gln-130, 176 to 178 (GMG), Glu-196, Arg-201, 242 to 243 (NA), 263 to 267 (QTSAH), 273 to 274 (YL), and Tyr-322. Cys-410 is a catalytic residue. An NAD(+)-binding site is contributed by Gly-492.

It belongs to the urocanase family. NAD(+) serves as cofactor.

It is found in the cytoplasm. The enzyme catalyses 4-imidazolone-5-propanoate = trans-urocanate + H2O. It participates in amino-acid degradation; L-histidine degradation into L-glutamate; N-formimidoyl-L-glutamate from L-histidine: step 2/3. Functionally, catalyzes the conversion of urocanate to 4-imidazolone-5-propionate. The chain is Urocanate hydratase from Shewanella frigidimarina (strain NCIMB 400).